The sequence spans 418 residues: AP-1 complex subunit mu (418 aa).

The MHD domain occupies 176–417; that stretch reads NNEAYFDVTE…VTKAGKFQVR (242 aa).

It belongs to the adaptor complexes medium subunit family. Adaptor protein complex 1 (AP-1) is a heterotetramer composed of two large adaptins (gamma- and beta'-type subunits), a medium adaptin (mu-type subunit AP47) and a small adaptin (sigma-type subunit AP19). Post-translationally, regulated by phosphorylation.

It localises to the golgi apparatus. The protein resides in the cytoplasmic vesicle. The protein localises to the clathrin-coated vesicle membrane. In terms of biological role, component of the adapter complexes which link clathrin to receptors in coated vesicles. Clathrin-associated protein complexes are believed to interact with the cytoplasmic tails of membrane proteins, leading to their selection and concentration. AP47 is a subunit of the plasma membrane adapter. This is AP-1 complex subunit mu from Diplobatis ommata (Ocellated electric ray).